The following is a 455-amino-acid chain: Keratin, type I cuticular Ha5 (455 aa).

Positions 1–97 (MASKCLKAGF…FGEGILTGNE (97 aa)) are head. The IF rod domain occupies 97 to 408 (EKETMQSLND…GLLESEDSKL (312 aa)). Positions 98 to 132 (KETMQSLNDRLAGYLEKVRQLEQENASLESRIREW) are coil 1A. Residues 133–143 (CEQQVPYMCPD) form a linker 1 region. Residues 144 to 244 (YQSYFRTIEE…HEEEVNSLRC (101 aa)) form a coil 1B region. Residues 245-260 (QLGDRLNVEVDAAPPV) form a linker 12 region. The interval 261-404 (DLNRVLEEMR…NTYRGLLESE (144 aa)) is coil 2. The segment at 405 to 455 (DSKLPCNPCAPDYSPSKSCLPCLPAASCGPSAARTNCSPRPICVPCPGGRF) is tail.

This sequence belongs to the intermediate filament family. Early expression in the hair follicle, mainly found in supramatricial cells and lowermost cortical cells of the hair bulb.

The chain is Keratin, type I cuticular Ha5 (KRT35) from Homo sapiens (Human).